The sequence spans 157 residues: NudC domain-containing protein 2 (157 aa).

N-acetylserine is present on S2. The region spanning 14–104 (CGTPWGQWYQ…DAANCWTSLL (91 aa)) is the CS domain. The tract at residues 134 to 157 (FDFSGAEISGNYTKGGPDFSNLEK) is disordered. At S142 the chain carries Phosphoserine. A Phosphotyrosine modification is found at Y145.

In terms of assembly, interacts with LIS1.

The protein localises to the chromosome. It is found in the centromere. The protein resides in the kinetochore. It localises to the cytoplasm. Its subcellular location is the cytoskeleton. The protein localises to the microtubule organizing center. It is found in the centrosome. The protein resides in the spindle pole. In terms of biological role, may regulate the LIS1/dynein pathway by stabilizing LIS1 with Hsp90 chaperone. In Mus musculus (Mouse), this protein is NudC domain-containing protein 2 (Nudcd2).